The following is a 311-amino-acid chain: Sulfate adenylyltransferase subunit 2 (311 aa).

This sequence belongs to the PAPS reductase family. CysD subfamily. Heterodimer composed of CysD, the smaller subunit, and CysN.

It catalyses the reaction sulfate + ATP + H(+) = adenosine 5'-phosphosulfate + diphosphate. It participates in sulfur metabolism; hydrogen sulfide biosynthesis; sulfite from sulfate: step 1/3. Functionally, with CysN forms the ATP sulfurylase (ATPS) that catalyzes the adenylation of sulfate producing adenosine 5'-phosphosulfate (APS) and diphosphate, the first enzymatic step in sulfur assimilation pathway. APS synthesis involves the formation of a high-energy phosphoric-sulfuric acid anhydride bond driven by GTP hydrolysis by CysN coupled to ATP hydrolysis by CysD. The chain is Sulfate adenylyltransferase subunit 2 from Methylobacterium sp. (strain 4-46).